A 644-amino-acid polypeptide reads, in one-letter code: Arginine--tRNA ligase (644 aa).

Positions 129–139 (ANPIHPLHLGH) match the 'HIGH' region motif.

It belongs to the class-I aminoacyl-tRNA synthetase family.

It is found in the cytoplasm. The enzyme catalyses tRNA(Arg) + L-arginine + ATP = L-arginyl-tRNA(Arg) + AMP + diphosphate. The protein is Arginine--tRNA ligase (argS) of Aeropyrum pernix (strain ATCC 700893 / DSM 11879 / JCM 9820 / NBRC 100138 / K1).